The following is a 246-amino-acid chain: Small ribosomal subunit protein uS2 (246 aa).

The protein belongs to the universal ribosomal protein uS2 family.

This chain is Small ribosomal subunit protein uS2, found in Pseudomonas aeruginosa (strain LESB58).